Consider the following 237-residue polypeptide: Phosphoribosylaminoimidazole-succinocarboxamide synthase (237 aa).

It belongs to the SAICAR synthetase family.

The enzyme catalyses 5-amino-1-(5-phospho-D-ribosyl)imidazole-4-carboxylate + L-aspartate + ATP = (2S)-2-[5-amino-1-(5-phospho-beta-D-ribosyl)imidazole-4-carboxamido]succinate + ADP + phosphate + 2 H(+). It participates in purine metabolism; IMP biosynthesis via de novo pathway; 5-amino-1-(5-phospho-D-ribosyl)imidazole-4-carboxamide from 5-amino-1-(5-phospho-D-ribosyl)imidazole-4-carboxylate: step 1/2. This Deinococcus radiodurans (strain ATCC 13939 / DSM 20539 / JCM 16871 / CCUG 27074 / LMG 4051 / NBRC 15346 / NCIMB 9279 / VKM B-1422 / R1) protein is Phosphoribosylaminoimidazole-succinocarboxamide synthase.